The following is a 349-amino-acid chain: 4-hydroxy-tetrahydrodipicolinate reductase 2, chloroplastic (349 aa).

Residues 1–53 (MAANGLMAASSVFLHRPVHPHFSFSSRTNQMVPLGFKGRVSFIGNVKRCFPVV) constitute a chloroplast transit peptide. Residues 81 to 86 (GCSGKM), 173 to 175 (GTT), and 196 to 199 (SPQM) contribute to the NAD(+) site. The active-site Proton donor/acceptor is the His232. The Proton donor role is filled by Lys236. (S)-2,3,4,5-tetrahydrodipicolinate is bound at residue 241-242 (GT).

Belongs to the DapB family.

The protein resides in the plastid. Its subcellular location is the chloroplast. The enzyme catalyses (S)-2,3,4,5-tetrahydrodipicolinate + NAD(+) + H2O = (2S,4S)-4-hydroxy-2,3,4,5-tetrahydrodipicolinate + NADH + H(+). The catalysed reaction is (S)-2,3,4,5-tetrahydrodipicolinate + NADP(+) + H2O = (2S,4S)-4-hydroxy-2,3,4,5-tetrahydrodipicolinate + NADPH + H(+). It functions in the pathway amino-acid biosynthesis; L-lysine biosynthesis via DAP pathway; (S)-tetrahydrodipicolinate from L-aspartate: step 4/4. Catalyzes the conversion of 4-hydroxy-tetrahydrodipicolinate (HTPA) to tetrahydrodipicolinate. This chain is 4-hydroxy-tetrahydrodipicolinate reductase 2, chloroplastic (DAPB2), found in Arabidopsis thaliana (Mouse-ear cress).